We begin with the raw amino-acid sequence, 157 residues long: 3-hydroxyacyl-[acyl-carrier-protein] dehydratase FabZ (157 aa).

The active site involves His58.

It belongs to the thioester dehydratase family. FabZ subfamily.

It is found in the cytoplasm. The catalysed reaction is a (3R)-hydroxyacyl-[ACP] = a (2E)-enoyl-[ACP] + H2O. Its function is as follows. Involved in unsaturated fatty acids biosynthesis. Catalyzes the dehydration of short chain beta-hydroxyacyl-ACPs and long chain saturated and unsaturated beta-hydroxyacyl-ACPs. The chain is 3-hydroxyacyl-[acyl-carrier-protein] dehydratase FabZ from Rhizorhabdus wittichii (strain DSM 6014 / CCUG 31198 / JCM 15750 / NBRC 105917 / EY 4224 / RW1) (Sphingomonas wittichii).